The primary structure comprises 106 residues: Small ribosomal subunit protein bS16 (106 aa).

Positions 84-106 are disordered; sequence KREARNNPEKAVPRKERKAADGK.

The sequence is that of Small ribosomal subunit protein bS16 from Rhodopseudomonas palustris (strain ATCC BAA-98 / CGA009).